A 130-amino-acid polypeptide reads, in one-letter code: MASNFEEFVLVDNGGTGDVKVAPSNFANGVAEWISSNSRSQAYKVTCSVRQSSANNRKYTVKVEVPKVATQVQGGVELPVAAWRSYMNMELTIPVFATNDDCALIVKALQGTFKTGNPIATAIAANSGIY.

Positions 32 to 105 (EWISSNSRSQ…FATNDDCALI (74 aa)) are viral RNA-binding.

Belongs to the Leviviricetes capsid protein family. Homodimer. The capsid proteins form dimers that assemble by group of 5. Twelve such pentamers are linked together with free dimers. The homodimers binds to the viral RNA via an operator hairpin, but also to many other RNA sequences in the viral genome; this interaction probably shifts the virus from the replicative to the assembly phase and ensures specific encapsidation of the viral genome.

The protein resides in the virion. In terms of biological role, capsid protein self-assembles to form an icosahedral capsid with a T=3 symmetry, about 26 nm in diameter, and consisting of 89 capsid proteins dimers (178 capsid proteins). Involved in viral genome encapsidation through the interaction between a capsid protein dimer and the multiple packaging signals present in the RNA genome. The capsid also contains 1 copy of the A2 maturation protein. Its function is as follows. Acts as a translational repressor of viral replicase synthesis late in infection. This latter function is the result of capsid protein interaction with an RNA hairpin which contains the replicase ribosome-binding site. The protein is Capsid protein of Enterobacteria phage fr (Bacteriophage fr).